The chain runs to 436 residues: GTPase Der (436 aa).

2 consecutive EngA-type G domains span residues 4–167 (PIVA…DEET) and 176–351 (IRLS…ENHK). GTP contacts are provided by residues 10–17 (GRPNVGKS), 57–61 (DTGGI), 119–122 (NKVD), 182–189 (GRPNVGKS), 229–233 (DTAGM), and 294–297 (NKWD). In terms of domain architecture, KH-like spans 352–436 (KRVQSSTLNE…PIHIIPRRRN (85 aa)).

This sequence belongs to the TRAFAC class TrmE-Era-EngA-EngB-Septin-like GTPase superfamily. EngA (Der) GTPase family. Associates with the 50S ribosomal subunit.

Functionally, GTPase that plays an essential role in the late steps of ribosome biogenesis. The chain is GTPase Der from Staphylococcus haemolyticus (strain JCSC1435).